Consider the following 181-residue polypeptide: GTP cyclohydrolase 1 2 (181 aa).

It belongs to the GTP cyclohydrolase I family. As to quaternary structure, homomer.

It carries out the reaction GTP + H2O = 7,8-dihydroneopterin 3'-triphosphate + formate + H(+). Its pathway is cofactor biosynthesis; 7,8-dihydroneopterin triphosphate biosynthesis; 7,8-dihydroneopterin triphosphate from GTP: step 1/1. The protein is GTP cyclohydrolase 1 2 (folE2) of Pseudomonas aeruginosa (strain ATCC 15692 / DSM 22644 / CIP 104116 / JCM 14847 / LMG 12228 / 1C / PRS 101 / PAO1).